The chain runs to 59 residues: Large ribosomal subunit protein bL33 (59 aa).

This sequence belongs to the bacterial ribosomal protein bL33 family.

The sequence is that of Large ribosomal subunit protein bL33 from Borrelia recurrentis (strain A1).